We begin with the raw amino-acid sequence, 837 residues long: Protein translocase subunit SecA (837 aa).

Residues Gln-85, Gly-103–Thr-107, and Asp-493 each bind ATP. Residues Cys-821, Cys-823, Cys-832, and His-833 each contribute to the Zn(2+) site.

This sequence belongs to the SecA family. In terms of assembly, monomer and homodimer. Part of the essential Sec protein translocation apparatus which comprises SecA, SecYEG and auxiliary proteins SecDF. Other proteins may also be involved. Zn(2+) is required as a cofactor.

Its subcellular location is the cell membrane. It localises to the cytoplasm. The enzyme catalyses ATP + H2O + cellular proteinSide 1 = ADP + phosphate + cellular proteinSide 2.. In terms of biological role, part of the Sec protein translocase complex. Interacts with the SecYEG preprotein conducting channel. Has a central role in coupling the hydrolysis of ATP to the transfer of proteins into and across the cell membrane, serving as an ATP-driven molecular motor driving the stepwise translocation of polypeptide chains across the membrane. In Streptococcus pneumoniae (strain Taiwan19F-14), this protein is Protein translocase subunit SecA.